A 145-amino-acid chain; its full sequence is MEITKEIFSLIAAVMLLLGSFIALISAIGIVKFQDVFLRSHAATKSSTLSVLLTLIGVLIYFIVNTGFFSVRLLLSLVFINLTSPVGMHLVARAAYRNGAYMYRKNDDHTHASILLSSNEQNSTKALQLRAKKREEYRKKWYQND.

3 helical membrane-spanning segments follow: residues 11–31, 51–71, and 72–92; these read IAAV…IGIV, VLLT…FFSV, and RLLL…HLVA.

It belongs to the CPA3 antiporters (TC 2.A.63) subunit G family. As to quaternary structure, may form a heterooligomeric complex that consists of seven subunits: mnhA2, mnhB2, mnhC2, mnhD2, mnhE2, mnhF2 and mnhG2.

It is found in the cell membrane. The chain is Putative antiporter subunit mnhG2 (mnhG2) from Staphylococcus aureus (strain MRSA252).